We begin with the raw amino-acid sequence, 546 residues long: DDB1- and CUL4-associated factor 11 (546 aa).

Positions M1–G19 are enriched in low complexity. Positions M1–V40 are disordered. Phosphoserine occurs at positions 49 and 75. WD repeat units lie at residues S170–K210, D216–D258, E263–Q302, S305–P345, G353–G392, G435–T480, and N481–D520. The interval P523 to Q546 is disordered. Over residues P536 to Q546 the composition is skewed to polar residues.

Interacts with DDB1 and CUL4A.

It functions in the pathway protein modification; protein ubiquitination. In terms of biological role, may function as a substrate receptor for CUL4-DDB1 E3 ubiquitin-protein ligase complex. This is DDB1- and CUL4-associated factor 11 (DCAF11) from Homo sapiens (Human).